Reading from the N-terminus, the 365-residue chain is UDP-N-acetylglucosamine--N-acetylmuramyl-(pentapeptide) pyrophosphoryl-undecaprenol N-acetylglucosamine transferase (365 aa).

Residues 19–21 (TGG), Asn131, Arg170, Ser201, Ile255, 274–279 (ALTVTE), and Gln300 each bind UDP-N-acetyl-alpha-D-glucosamine.

The protein belongs to the glycosyltransferase 28 family. MurG subfamily.

It localises to the cell inner membrane. The catalysed reaction is di-trans,octa-cis-undecaprenyl diphospho-N-acetyl-alpha-D-muramoyl-L-alanyl-D-glutamyl-meso-2,6-diaminopimeloyl-D-alanyl-D-alanine + UDP-N-acetyl-alpha-D-glucosamine = di-trans,octa-cis-undecaprenyl diphospho-[N-acetyl-alpha-D-glucosaminyl-(1-&gt;4)]-N-acetyl-alpha-D-muramoyl-L-alanyl-D-glutamyl-meso-2,6-diaminopimeloyl-D-alanyl-D-alanine + UDP + H(+). The protein operates within cell wall biogenesis; peptidoglycan biosynthesis. Cell wall formation. Catalyzes the transfer of a GlcNAc subunit on undecaprenyl-pyrophosphoryl-MurNAc-pentapeptide (lipid intermediate I) to form undecaprenyl-pyrophosphoryl-MurNAc-(pentapeptide)GlcNAc (lipid intermediate II). The protein is UDP-N-acetylglucosamine--N-acetylmuramyl-(pentapeptide) pyrophosphoryl-undecaprenol N-acetylglucosamine transferase of Acinetobacter baumannii (strain AB307-0294).